The chain runs to 412 residues: Cinnamoyl-CoA:phenyllactate CoA-transferase (412 aa).

Asparagine 102 lines the CoA pocket. Catalysis depends on aspartate 176, which acts as the Nucleophile.

In terms of assembly, homodimer. Part of the heterotrimeric phenyllactate dehydratase complex FldABC, composed of (R)-phenyllactate CoA-transferase (FldA) and a heterodimeric (R)-phenyllactyl-CoA dehydratase (FldB and FldC).

The catalysed reaction is (E)-cinnamoyl-CoA + (R)-3-phenyllactate = (R)-3-phenyllactoyl-CoA + (E)-cinnamate. It functions in the pathway amino-acid degradation; L-phenylalanine degradation. In terms of biological role, component of the phenyllactate dehydratase complex FldABC that is involved in the fermentation of L-phenylalanine via a Stickland reaction. This complex catalyzes the reversible syn-dehydration of (R)-phenyllactate to (E)-cinnamate in two steps, a CoA-transfer from cinnamoyl-CoA to phenyllactate, catalyzed by FldA, followed by the dehydration of phenyllactyl-CoA to cinnamoyl-CoA, catalyzed by FldB and FldC. In vitro, FldA can use 3-phenylpropanoate as a better CoA-acceptor than phenyllactate. The polypeptide is Cinnamoyl-CoA:phenyllactate CoA-transferase (Clostridium sporogenes).